The following is a 1263-amino-acid chain: Kinesin-like protein KIN-12E (1263 aa).

Residues 21–44 (PAPSESLRSVPCTPEANTVSRDNH) are disordered. Residues 35 to 44 (EANTVSRDNH) are compositionally biased toward polar residues. Residues 93-430 (NVQVIIRTRP…LKFAQRAKLI (338 aa)) enclose the Kinesin motor domain. Residue 174 to 181 (GQTGSGKT) coordinates ATP. Coiled coils occupy residues 679–737 (SKKL…KIRS), 764–805 (AEAH…AEEN), 831–881 (ALEV…KRLL), 905–966 (SEKS…HQSE), 1091–1168 (TDLL…TIQE), and 1193–1251 (LRKE…VLSL).

This sequence belongs to the TRAFAC class myosin-kinesin ATPase superfamily. Kinesin family. KIN-12 subfamily.

The chain is Kinesin-like protein KIN-12E from Arabidopsis thaliana (Mouse-ear cress).